Consider the following 428-residue polypeptide: Glutamate-1-semialdehyde 2,1-aminomutase 1 (428 aa).

Lys267 is subject to N6-(pyridoxal phosphate)lysine.

It belongs to the class-III pyridoxal-phosphate-dependent aminotransferase family. HemL subfamily. As to quaternary structure, homodimer. The cofactor is pyridoxal 5'-phosphate.

It is found in the cytoplasm. The catalysed reaction is (S)-4-amino-5-oxopentanoate = 5-aminolevulinate. Its pathway is porphyrin-containing compound metabolism; protoporphyrin-IX biosynthesis; 5-aminolevulinate from L-glutamyl-tRNA(Glu): step 2/2. In Staphylococcus aureus (strain bovine RF122 / ET3-1), this protein is Glutamate-1-semialdehyde 2,1-aminomutase 1.